The sequence spans 492 residues: Catalase (492 aa).

Catalysis depends on residues H65 and N138. Residue Y348 participates in heme binding.

Belongs to the catalase family. As to quaternary structure, homotetramer. Heme serves as cofactor.

It localises to the cytoplasm. The protein resides in the cytosol. The protein localises to the peroxisome matrix. The catalysed reaction is 2 H2O2 = O2 + 2 H2O. In terms of biological role, catalyzes the degradation of hydrogen peroxide (H(2)O(2)) generated by peroxisomal oxidases to water and oxygen, thereby protecting cells from the toxic effects of hydrogen peroxide. In Triticum aestivum (Wheat), this protein is Catalase (CATA).